The chain runs to 485 residues: GTPase Der (485 aa).

2 consecutive EngA-type G domains span residues 3–167 and 176–349; these read PTIA…PEPE and PVFA…NAAM. GTP is bound by residues 9–16, 56–60, 119–122, 182–189, 229–233, and 294–297; these read GRPNVGKS, DTGGF, NKGE, DTAGV, and NKWD. One can recognise a KH-like domain in the interval 350 to 434; that stretch reads IKMPTPKITR…PLRIQYNVSE (85 aa). The segment at 435 to 485 is disordered; that stretch reads NPYENAEDKPKKKPLRRVSLSNRIEKREGRKEEKNRFKKKTKVSVKKQFSK. Residues 457–469 are compositionally biased toward basic and acidic residues; sequence RIEKREGRKEEKN. Basic residues predominate over residues 470-485; that stretch reads RFKKKTKVSVKKQFSK.

This sequence belongs to the TRAFAC class TrmE-Era-EngA-EngB-Septin-like GTPase superfamily. EngA (Der) GTPase family. As to quaternary structure, associates with the 50S ribosomal subunit.

GTPase that plays an essential role in the late steps of ribosome biogenesis. The protein is GTPase Der of Neisseria meningitidis serogroup B (strain ATCC BAA-335 / MC58).